Reading from the N-terminus, the 83-residue chain is Small ribosomal subunit protein bS16c (83 aa).

The protein belongs to the bacterial ribosomal protein bS16 family.

The protein localises to the plastid. It is found in the chloroplast. The sequence is that of Small ribosomal subunit protein bS16c from Chaetosphaeridium globosum (Charophycean green alga).